Reading from the N-terminus, the 334-residue chain is Putative transport protein MJ1177 (334 aa).

The next 7 helical transmembrane spans lie at 13–33, 61–81, 138–158, 191–211, 234–254, 259–279, and 293–313; these read VIVGLLIMLLYIIWPFIDVLA, LAISIYILPIMTITIYALLTF, IIDVGYLIVKVIMVLFLTFYF, SYKNLFISCVSLSIIITILSY, LLPILGGWMVYISIAIYFFLI, KAVFMFIYGELFLSIAPDFVI, and VLVVIAFLMAPLSLGLSGFAI.

This sequence belongs to the autoinducer-2 exporter (AI-2E) (TC 2.A.86) family.

The protein localises to the cell membrane. In Methanocaldococcus jannaschii (strain ATCC 43067 / DSM 2661 / JAL-1 / JCM 10045 / NBRC 100440) (Methanococcus jannaschii), this protein is Putative transport protein MJ1177.